The following is a 539-amino-acid chain: Aluminum-activated malate transporter 13 (539 aa).

The next 6 membrane-spanning stretches (helical) occupy residues 57–77 (VGVA…FEGV), 80–100 (NALW…GATL), 107–127 (GLGT…AIHS), 130–150 (ILGG…ITYM), 165–185 (LVFL…DTVI), and 192–212 (LYTI…FFPI).

The protein belongs to the aromatic acid exporter (TC 2.A.85) family.

It localises to the membrane. In terms of biological role, malate transporter. In Arabidopsis thaliana (Mouse-ear cress), this protein is Aluminum-activated malate transporter 13 (ALMT13).